Consider the following 202-residue polypeptide: Urease accessory protein UreG (202 aa).

Residue 10–17 participates in GTP binding; that stretch reads GPVGSGKT.

It belongs to the SIMIBI class G3E GTPase family. UreG subfamily. Homodimer. UreD, UreF and UreG form a complex that acts as a GTP-hydrolysis-dependent molecular chaperone, activating the urease apoprotein by helping to assemble the nickel containing metallocenter of UreC. The UreE protein probably delivers the nickel.

It is found in the cytoplasm. In terms of biological role, facilitates the functional incorporation of the urease nickel metallocenter. This process requires GTP hydrolysis, probably effectuated by UreG. This Synechococcus sp. (strain JA-3-3Ab) (Cyanobacteria bacterium Yellowstone A-Prime) protein is Urease accessory protein UreG.